The chain runs to 586 residues: FAD-linked oxidoreductase orf1 (586 aa).

The first 17 residues, 1–17 (MKSFATTVLLVTPGIYA), serve as a signal peptide directing secretion. N-linked (GlcNAc...) asparagine glycans are attached at residues N29, N51, N79, N110, N146, N188, N314, N321, N358, N402, N434, and N461. Positions 124–303 (TLGNYVSYAI…LSMTAKVHPD (180 aa)) constitute an FAD-binding PCMH-type domain.

It belongs to the oxygen-dependent FAD-linked oxidoreductase family.

The catalysed reaction is betaenone C = betaenone A. It functions in the pathway mycotoxin biosynthesis. Its function is as follows. FAD-linked oxidoreductase; part of the gene cluster that mediates the biosynthesis of betaenones, phytotoxic polyketides involved in leaf spot disease in sugar beets. The first step of the pathway is the synthesis of dehydroprobetaenone I by the polyketide synthase bet1 and the enoyl reductase bet3 via condensation of one acetyl-CoA starter unit with 7 malonyl-CoA units and 5 methylations. The C-terminal reductase (R) domain of bet1 catalyzes the reductive release of the polyketide chain. Because bet1 lacks a designated enoylreductase (ER) domain, the required activity is provided the enoyl reductase bet3. The short-chain dehydrogenase/reductase bet4 then catalyzes reduction of dehydroprobetaenone I to probetaenone I. The cytochrome P450 monooxygenase bet2 catalyzes successive epoxidation, oxidation (resulting from epoxide opening) and hydroxylation to install a tertiary alcohol in the decaline ring to yield betaenone C from dehydroprobetaenone I and betaenone B from probetaenone I. The FAD-linked oxidoreductase (orf1) is probably responsible for the conversion of betaenone C to betaenone A via an intramolecular aldol reaction between C-1 and C-17 to form the bridged tricyclic system in betaenone A. This Neocamarosporium betae (Beet black rot fungus) protein is FAD-linked oxidoreductase orf1.